The following is a 226-amino-acid chain: Fibrillarin-like rRNA/tRNA 2'-O-methyltransferase (226 aa).

S-adenosyl-L-methionine contacts are provided by residues 85–86 (TT), 104–105 (EF), 129–130 (DA), and 149–152 (DVAQ).

This sequence belongs to the methyltransferase superfamily. Fibrillarin family. As to quaternary structure, interacts with nop5. Component of box C/D small ribonucleoprotein (sRNP) particles that contain rpl7ae, FlpA and nop5, plus a guide RNA.

Functionally, involved in pre-rRNA and tRNA processing. Utilizes the methyl donor S-adenosyl-L-methionine to catalyze the site-specific 2'-hydroxyl methylation of ribose moieties in rRNA and tRNA. Site specificity is provided by a guide RNA that base pairs with the substrate. Methylation occurs at a characteristic distance from the sequence involved in base pairing with the guide RNA. The protein is Fibrillarin-like rRNA/tRNA 2'-O-methyltransferase of Thermococcus sibiricus (strain DSM 12597 / MM 739).